A 284-amino-acid polypeptide reads, in one-letter code: MQSEQQAIGASGCEDAQQPVRQQRARGRGRIVTKAVEGRSRLDELFQEGCAKIRLPDTFSNEAEAILINSSGGLTGGDDIEWQATAGAGTSLVVTTQACEKVYKASSGTATVTARISAGPGAKLHWLPQETILFDRASLNRRLEADLDQSSEFIAVEAVLLGRQAMGEAMTHGLFRDRWRIRHGGRLVHAEELLLEGEVAELTAKPAVLAGQVAFATLLYIGPLSEALLPKIRAIAGESGGASEWQGKLVVRVSAADGFSLRKLLFPIISLLRNGAPVPKVWNL.

The interval 1-28 (MQSEQQAIGASGCEDAQQPVRQQRARGR) is disordered.

The protein belongs to the UreD family. In terms of assembly, ureD, UreF and UreG form a complex that acts as a GTP-hydrolysis-dependent molecular chaperone, activating the urease apoprotein by helping to assemble the nickel containing metallocenter of UreC. The UreE protein probably delivers the nickel.

Its subcellular location is the cytoplasm. Required for maturation of urease via the functional incorporation of the urease nickel metallocenter. This chain is Urease accessory protein UreD, found in Agrobacterium fabrum (strain C58 / ATCC 33970) (Agrobacterium tumefaciens (strain C58)).